The chain runs to 509 residues: ATP synthase subunit alpha (509 aa).

169 to 176 (GDRQTGKT) lines the ATP pocket.

The protein belongs to the ATPase alpha/beta chains family. In terms of assembly, F-type ATPases have 2 components, CF(1) - the catalytic core - and CF(0) - the membrane proton channel. CF(1) has five subunits: alpha(3), beta(3), gamma(1), delta(1), epsilon(1). CF(0) has three main subunits: a(1), b(2) and c(9-12). The alpha and beta chains form an alternating ring which encloses part of the gamma chain. CF(1) is attached to CF(0) by a central stalk formed by the gamma and epsilon chains, while a peripheral stalk is formed by the delta and b chains.

It is found in the cell inner membrane. It catalyses the reaction ATP + H2O + 4 H(+)(in) = ADP + phosphate + 5 H(+)(out). Functionally, produces ATP from ADP in the presence of a proton gradient across the membrane. The alpha chain is a regulatory subunit. The chain is ATP synthase subunit alpha from Parvibaculum lavamentivorans (strain DS-1 / DSM 13023 / NCIMB 13966).